Here is an 86-residue protein sequence, read N- to C-terminus: uncharacterized protein (86 aa).

To M.jannaschii MJ0526.1.

This is an uncharacterized protein from Methanothermobacter thermautotrophicus (strain ATCC 29096 / DSM 1053 / JCM 10044 / NBRC 100330 / Delta H) (Methanobacterium thermoautotrophicum).